The chain runs to 130 residues: Histone H2A type 2-B (130 aa).

Positions M1–A22 are disordered. S2 carries the post-translational modification N-acetylserine. A Phosphoserine; by RPS6KA5 modification is found at S2. R4 carries the citrulline; alternate modification. At R4 the chain carries Symmetric dimethylarginine; by PRMT5; alternate. An N6-(2-hydroxyisobutyryl)lysine; alternate mark is found at K6 and K10. The residue at position 6 (K6) is an N6-(beta-hydroxybutyryl)lysine; alternate. A compositionally biased stretch (basic residues) spans Q7–S19. At K10 the chain carries N6-lactoyllysine; alternate. An N6-succinyllysine; alternate modification is found at K10. Glycyl lysine isopeptide (Lys-Gly) (interchain with G-Cter in ubiquitin) cross-links involve residues K14 and K16. K37 is modified (N6-(2-hydroxyisobutyryl)lysine; alternate). K37 is modified (N6-(beta-hydroxybutyryl)lysine; alternate). The residue at position 37 (K37) is an N6-crotonyllysine; alternate. K75 and K76 each carry N6-(2-hydroxyisobutyryl)lysine. K96 is modified (N6-(2-hydroxyisobutyryl)lysine; alternate). Residue K96 is modified to N6-succinyllysine; alternate. K96 carries the N6-glutaryllysine; alternate modification. Q105 is subject to N5-methylglutamine. K119 is subject to N6-(2-hydroxyisobutyryl)lysine; alternate. 2 positions are modified to N6-crotonyllysine; alternate: K119 and K120. An N6-glutaryllysine; alternate mark is found at K119 and K120. K120 carries the post-translational modification N6-(beta-hydroxybutyryl)lysine; alternate. K120 is covalently cross-linked (Glycyl lysine isopeptide (Lys-Gly) (interchain with G-Cter in ubiquitin); alternate). T121 is modified (phosphothreonine; by DCAF1).

The protein belongs to the histone H2A family. The nucleosome is a histone octamer containing two molecules each of H2A, H2B, H3 and H4 assembled in one H3-H4 heterotetramer and two H2A-H2B heterodimers. The octamer wraps approximately 147 bp of DNA. Deiminated on Arg-4 in granulocytes upon calcium entry. In terms of processing, monoubiquitination of Lys-120 (H2AK119Ub) by RING1, TRIM37 and RNF2/RING2 complex gives a specific tag for epigenetic transcriptional repression and participates in X chromosome inactivation of female mammals. It is involved in the initiation of both imprinted and random X inactivation. Ubiquitinated H2A is enriched in inactive X chromosome chromatin. Ubiquitination of H2A functions downstream of methylation of 'Lys-27' of histone H3 (H3K27me). H2AK119Ub by RNF2/RING2 can also be induced by ultraviolet and may be involved in DNA repair. Following DNA double-strand breaks (DSBs), it is ubiquitinated through 'Lys-63' linkage of ubiquitin moieties by the E2 ligase UBE2N and the E3 ligases RNF8 and RNF168, leading to the recruitment of repair proteins to sites of DNA damage. Ubiquitination at Lys-14 and Lys-16 (H2AK13Ub and H2AK15Ub, respectively) in response to DNA damage is initiated by RNF168 that mediates monoubiquitination at these 2 sites, and 'Lys-63'-linked ubiquitin are then conjugated to monoubiquitin; RNF8 is able to extend 'Lys-63'-linked ubiquitin chains in vitro. Deubiquitinated by USP51 at Lys-14 and Lys-16 (H2AK13Ub and H2AK15Ub, respectively) after damaged DNA is repaired. H2AK119Ub and ionizing radiation-induced 'Lys-63'-linked ubiquitination (H2AK13Ub and H2AK15Ub) are distinct events. Post-translationally, phosphorylation on Ser-2 (H2AS1ph) is enhanced during mitosis. Phosphorylation on Ser-2 by RPS6KA5/MSK1 directly represses transcription. Acetylation of H3 inhibits Ser-2 phosphorylation by RPS6KA5/MSK1. Phosphorylation at Thr-121 (H2AT120ph) by DCAF1 is present in the regulatory region of many tumor suppresor genes and down-regulates their transcription. Symmetric dimethylation on Arg-4 by the PRDM1/PRMT5 complex may play a crucial role in the germ-cell lineage. In terms of processing, glutamine methylation at Gln-105 (H2AQ104me) by FBL is specifically dedicated to polymerase I. It is present at 35S ribosomal DNA locus and impairs binding of the FACT complex. Post-translationally, crotonylation (Kcr) is specifically present in male germ cells and marks testis-specific genes in post-meiotic cells, including X-linked genes that escape sex chromosome inactivation in haploid cells. Crotonylation marks active promoters and enhancers and confers resistance to transcriptional repressors. It is also associated with post-meiotically activated genes on autosomes. Hydroxybutyrylation of histones is induced by starvation. In terms of processing, lactylated in macrophages by EP300/P300 by using lactoyl-CoA directly derived from endogenous or exogenous lactate, leading to stimulates gene transcription.

It localises to the nucleus. Its subcellular location is the chromosome. Core component of nucleosome. Nucleosomes wrap and compact DNA into chromatin, limiting DNA accessibility to the cellular machineries which require DNA as a template. Histones thereby play a central role in transcription regulation, DNA repair, DNA replication and chromosomal stability. DNA accessibility is regulated via a complex set of post-translational modifications of histones, also called histone code, and nucleosome remodeling. This Mus musculus (Mouse) protein is Histone H2A type 2-B.